The following is a 338-amino-acid chain: Methionine synthase (338 aa).

Zn(2+) is bound by residues His-211, Cys-213, and Cys-294.

Belongs to the archaeal MetE family. Zn(2+) serves as cofactor.

The protein operates within amino-acid biosynthesis; L-methionine biosynthesis via de novo pathway. Functionally, catalyzes the transfer of a methyl group to L-homocysteine resulting in methionine formation. The physiological methyl donor is unknown. The protein is Methionine synthase of Sulfurisphaera tokodaii (strain DSM 16993 / JCM 10545 / NBRC 100140 / 7) (Sulfolobus tokodaii).